The chain runs to 200 residues: Superoxide dismutase [Fe] (200 aa).

His-28, His-82, Asp-165, and His-169 together coordinate Fe cation.

It belongs to the iron/manganese superoxide dismutase family. As to quaternary structure, homodimer. Fe cation serves as cofactor.

The enzyme catalyses 2 superoxide + 2 H(+) = H2O2 + O2. Its function is as follows. Destroys superoxide anion radicals which are normally produced within the cells and which are toxic to biological systems. This is Superoxide dismutase [Fe] (sodB) from Rhodobacter capsulatus (Rhodopseudomonas capsulata).